Here is a 342-residue protein sequence, read N- to C-terminus: Arginase 1, mitochondrial (342 aa).

The transit peptide at Met-1–Thr-22 directs the protein to the mitochondrion. Residues Ser-77 and Gly-96–Asn-99 contribute to the L-ornithine site. His-161, Asp-185, His-187, and Asp-189 together coordinate Mn(2+). Asp-189–Tyr-191 serves as a coordination point for L-ornithine. Glu-195–Asn-197 provides a ligand contact to substrate. Residue Ser-224 participates in L-ornithine binding. Mn(2+)-binding residues include Asp-270 and Asp-272. Residue Glu-313 participates in substrate binding.

The protein belongs to the arginase family. Forms homohexamers. It depends on Mn(2+) as a cofactor. As to expression, expressed in vasculature of roots, root tips, cotyledons, leaves, cauline leaves, stems, sepals and pollen.

It is found in the mitochondrion. It catalyses the reaction L-arginine + H2O = urea + L-ornithine. The catalysed reaction is agmatine + H2O = urea + putrescine. The protein operates within nitrogen metabolism; urea cycle; L-ornithine and urea from L-arginine: step 1/1. It participates in amine and polyamine biosynthesis; putrescine biosynthesis via agmatine pathway; putrescine from agmatine: step 1/1. Catalyzes the hydrolysis of L-arginine to urea and L-ornithine. The latter can be utilized in the urea cycle or as a precursor for the synthesis of both polyamines and proline. Possesses agmatinase activity. Catalyzes the formation of putrescine from agmatine. In Arabidopsis thaliana (Mouse-ear cress), this protein is Arginase 1, mitochondrial.